We begin with the raw amino-acid sequence, 254 residues long: Glutathione S-transferase U12 (254 aa).

A Nuclear localization signal motif is present at residues 19 to 23; the sequence is KKRKK. Positions 33–114 constitute a GST N-terminal domain; that stretch reads TTVKLIGTWA…YVDESWPSDL (82 aa). Glutathione contacts are provided by residues 43-44, 71-72, 85-86, and 98-99; these read SP, GK, KV, and ES. A GST C-terminal domain is found at 120–252; sequence LPSERAFARF…EFIEFAKKKF (133 aa).

The protein belongs to the GST superfamily. Tau family.

The protein resides in the nucleus. It carries out the reaction RX + glutathione = an S-substituted glutathione + a halide anion + H(+). Functionally, may be involved in the conjugation of reduced glutathione to a wide number of exogenous and endogenous hydrophobic electrophiles and have a detoxification role against certain herbicides. The sequence is that of Glutathione S-transferase U12 (GSTU12) from Arabidopsis thaliana (Mouse-ear cress).